Here is a 1130-residue protein sequence, read N- to C-terminus: ABC transporter ATM1 (1130 aa).

Residues 1–65 (MQPPTRAPFF…ESFHSSAFQL (65 aa)) constitute a mitochondrion transit peptide. Disordered stretches follow at residues 191-212 (DAWT…CVRP), 276-315 (HHAP…RNMS), and 341-385 (STFS…TSSP). Polar residues-rich tracts occupy residues 195 to 206 (SGCSGQTDNATA) and 305 to 315 (GSLTLSPRNMS). A helical membrane pass occupies residues 406 to 426 (PNPTSLQLLFSLFPFLWPTAL). Positions 468 to 502 (PLSPSGASPSSGDTSLLASSGETSSSLSPSAAPAE) are enriched in low complexity. Residues 468 to 554 (PLSPSGASPS…AGKAGTSVGG (87 aa)) are disordered. Basic and acidic residues predominate over residues 503–523 (GAREAGKSGESAGRERRDEGS). Helical transmembrane passes span 574-594 (IVSV…AATG), 653-673 (VLLF…YLLG), 678-698 (GPVA…TAAV), 761-781 (LAFL…GSLA), and 791-811 (LLPV…AVPL). One can recognise an ABC transmembrane type-1 domain in the interval 587-823 (VARIAATGFN…VGTIYRETSL (237 aa)). Residues 857-1111 (VAFENVRFAY…ERGLYRALWE (255 aa)) form the ABC transporter domain. Residue 910-917 (GPSGVGKS) coordinates ATP.

The protein belongs to the ABC transporter superfamily. ABCB family. Heavy Metal importer (TC 3.A.1.210) subfamily. Homodimer.

The protein resides in the mitochondrion membrane. Its function is as follows. Probably transports iron-sulfur clusters in an ATP-dependent manner. Plays a role in [Fe-S] proteins homeostasis. Required for optimal parasite growth and lytic cycle. The polypeptide is ABC transporter ATM1 (Toxoplasma gondii (strain ATCC 50611 / Me49)).